We begin with the raw amino-acid sequence, 1415 residues long: Bridge-like lipid transfer protein family member 3B (1415 aa).

A Chorein N-terminal domain is found at 3-94 (GLIKKQILKH…DKVIMEMSTC (92 aa)). Disordered stretches follow at residues 267 to 300 (STEQ…STTP) and 882 to 904 (KSPL…SEGV). Over residues 275-300 (ASETTQSPTPPVSSQQVKNPQTSTTP) the composition is skewed to polar residues. A coiled-coil region spans residues 1367 to 1404 (KAAGISKEQLVEENECLKQELAKTKMALAESHMERDRL).

It localises to the cytoplasm. It is found in the cytosol. The protein localises to the early endosome. Tube-forming lipid transport protein which mediates the transfer of lipids between membranes at organelle contact sites. Required for retrograde traffic of vesicle clusters in the early endocytic pathway to the Golgi complex. The sequence is that of Bridge-like lipid transfer protein family member 3B (bltp3b) from Xenopus laevis (African clawed frog).